The primary structure comprises 99 residues: MSTLTKSDMIEHLMSHLNLTRQEGRCLVENFFDELSESLIDGKEVKLSGFGNFELKDKNSRPGRNPKTGEPVAVSARRVVTFKTGQKFRQQVDERLFDQ.

Belongs to the bacterial histone-like protein family. Heterodimer of an alpha and a beta chain.

Functionally, this protein is one of the two subunits of integration host factor, a specific DNA-binding protein that functions in genetic recombination as well as in transcriptional and translational control. The chain is Integration host factor subunit alpha from Psychrobacter arcticus (strain DSM 17307 / VKM B-2377 / 273-4).